Reading from the N-terminus, the 965-residue chain is Aminopeptidase N (965 aa).

The Cytoplasmic segment spans residues 2 to 8; sequence AKGFYIS. Residues 9-32 traverse the membrane as a helical; Signal-anchor for type II membrane protein segment; it reads KTLGILGILLGVAAVCTIIALSVV. The tract at residues 33-68 is cytosolic Ser/Thr-rich junction; sequence YAQEKNRNAENSAIAPTLPGSTSATTSTTNPAIDES. The Extracellular portion of the chain corresponds to 33 to 965; it reads YAQEKNRNAE…VVLKWFTENS (933 aa). The disordered stretch occupies residues 44–68; the sequence is SAIAPTLPGSTSATTSTTNPAIDES. The segment covering 47 to 64 has biased composition (low complexity); the sequence is APTLPGSTSATTSTTNPA. The tract at residues 69–965 is metalloprotease; the sequence is KPWNQYRLPK…VVLKWFTENS (897 aa). Asparagine 114 and asparagine 128 each carry an N-linked (GlcNAc...) asparagine glycan. Position 176 is a sulfotyrosine (tyrosine 176). N-linked (GlcNAc...) asparagine glycans are attached at residues asparagine 234, asparagine 242, and asparagine 264. Residue 351–355 coordinates substrate; that stretch reads GAMEN. Zn(2+) is bound at residue histidine 387. Glutamate 388 acts as the Proton acceptor in catalysis. The Zn(2+) site is built by histidine 391 and glutamate 410. N-linked (GlcNAc...) asparagine glycosylation is found at asparagine 555, asparagine 606, and asparagine 624. A disulfide bridge links cysteine 760 with cysteine 767. A glycan (N-linked (GlcNAc...) asparagine) is linked at asparagine 780. Cysteine 797 and cysteine 833 are joined by a disulfide. At tyrosine 852 the chain carries Phosphotyrosine.

It belongs to the peptidase M1 family. In terms of assembly, homodimer. Interacts with SLC6A19. Zn(2+) serves as cofactor. Sulfated. In terms of processing, N- and O-glycosylated. Post-translationally, may undergo proteolysis and give rise to a soluble form. As to expression, widely distributed throughout the CNS. Particularly abundant in kidney and intestinal microvilli, also detected in lung and liver. Weakly expressed in heart and aorta.

It localises to the cell membrane. It catalyses the reaction Release of an N-terminal amino acid, Xaa-|-Yaa- from a peptide, amide or arylamide. Xaa is preferably Ala, but may be most amino acids including Pro (slow action). When a terminal hydrophobic residue is followed by a prolyl residue, the two may be released as an intact Xaa-Pro dipeptide.. Functionally, broad specificity aminopeptidase which plays a role in the final digestion of peptides generated from hydrolysis of proteins by gastric and pancreatic proteases. Also involved in the processing of various peptides including peptide hormones, such as angiotensin III and IV, neuropeptides, and chemokines. May also be involved the cleavage of peptides bound to major histocompatibility complex class II molecules of antigen presenting cells. May have a role in angiogenesis and promote cholesterol crystallization. May have a role in amino acid transport by acting as binding partner of amino acid transporter SLC6A19 and regulating its activity. In Rattus norvegicus (Rat), this protein is Aminopeptidase N (Anpep).